A 227-amino-acid polypeptide reads, in one-letter code: 7-cyano-7-deazaguanine synthase (227 aa).

7-17 (LSGGMDSLVTT) contributes to the ATP binding site. Residues Cys187, Cys195, Cys198, and Cys201 each contribute to the Zn(2+) site.

The protein belongs to the QueC family. The cofactor is Zn(2+).

It carries out the reaction 7-carboxy-7-deazaguanine + NH4(+) + ATP = 7-cyano-7-deazaguanine + ADP + phosphate + H2O + H(+). It functions in the pathway purine metabolism; 7-cyano-7-deazaguanine biosynthesis. Functionally, catalyzes the ATP-dependent conversion of 7-carboxy-7-deazaguanine (CDG) to 7-cyano-7-deazaguanine (preQ(0)). This is 7-cyano-7-deazaguanine synthase from Chlorobium luteolum (strain DSM 273 / BCRC 81028 / 2530) (Pelodictyon luteolum).